Here is a 224-residue protein sequence, read N- to C-terminus: Small ribosomal subunit protein uS3 (224 aa).

The KH type-2 domain occupies 39 to 107; it reads IREFLKKKPS…DVWVEIAEVK (69 aa).

This sequence belongs to the universal ribosomal protein uS3 family. Part of the 30S ribosomal subunit. Forms a tight complex with proteins S10 and S14.

Its function is as follows. Binds the lower part of the 30S subunit head. Binds mRNA in the 70S ribosome, positioning it for translation. The sequence is that of Small ribosomal subunit protein uS3 from Chlamydia trachomatis serovar L2 (strain ATCC VR-902B / DSM 19102 / 434/Bu).